Here is a 148-residue protein sequence, read N- to C-terminus: Large ribosomal subunit protein bL9 (148 aa).

Residues 46–65 are disordered; that stretch reads QLQQQNKHAEQEREQEIEDA. Residues 52 to 65 show a composition bias toward basic and acidic residues; that stretch reads KHAEQEREQEIEDA.

Belongs to the bacterial ribosomal protein bL9 family.

In terms of biological role, binds to the 23S rRNA. This chain is Large ribosomal subunit protein bL9, found in Staphylococcus carnosus (strain TM300).